The chain runs to 529 residues: Endoglucanase 21 (529 aa).

The signal sequence occupies residues 1 to 24 (MVAAMTMCAAVAVLLVLTSTMAAA). Residue D89 is the Nucleophile of the active site. N342 is a glycosylation site (N-linked (GlcNAc...) asparagine). Residues H429, D481, and E490 contribute to the active site.

This sequence belongs to the glycosyl hydrolase 9 (cellulase E) family. In terms of tissue distribution, expressed in roots and flowers.

The protein resides in the secreted. It catalyses the reaction Endohydrolysis of (1-&gt;4)-beta-D-glucosidic linkages in cellulose, lichenin and cereal beta-D-glucans.. The protein is Endoglucanase 21 (GLU9) of Oryza sativa subsp. japonica (Rice).